A 332-amino-acid polypeptide reads, in one-letter code: DNA double-strand break repair nuclease NurA (332 aa).

Mn(2+) contacts are provided by Asp-57 and Asp-132.

It belongs to the NurA family. Mn(2+) serves as cofactor.

Functionally, involved in DNA double-strand break (DSB) repair. Probably acts with HerA to stimulate resection of the 5' strand and produce the long 3' single-strand that is required for RadA loading. Exhibits both single-stranded endonuclease activity and 5'-3' exonuclease activity on single-stranded and double-stranded DNA. The polypeptide is DNA double-strand break repair nuclease NurA (Sulfolobus acidocaldarius (strain ATCC 33909 / DSM 639 / JCM 8929 / NBRC 15157 / NCIMB 11770)).